We begin with the raw amino-acid sequence, 657 residues long: Probable cobalt/nickel-exporting P-type ATPase (657 aa).

5 helical membrane passes run W40–P60, A62–A82, A101–F121, L268–L288, and M299–I319. Residue D347 is the 4-aspartylphosphate intermediate of the active site. D543 and D547 together coordinate Mg(2+). The helical transmembrane segment at V596–G618 threads the bilayer.

This sequence belongs to the cation transport ATPase (P-type) (TC 3.A.3) family. Type IB subfamily.

The protein localises to the cell membrane. Involved in heavy metal homeostasis. Probably exports nickel and cobalt ions out of the cell. The chain is Probable cobalt/nickel-exporting P-type ATPase (ctpD) from Mycobacterium bovis (strain ATCC BAA-935 / AF2122/97).